The primary structure comprises 206 residues: Small ribosomal subunit protein uS4 (206 aa).

The 58-residue stretch at Thr-98 to Val-155 folds into the S4 RNA-binding domain.

It belongs to the universal ribosomal protein uS4 family. As to quaternary structure, part of the 30S ribosomal subunit. Contacts protein S5. The interaction surface between S4 and S5 is involved in control of translational fidelity.

In terms of biological role, one of the primary rRNA binding proteins, it binds directly to 16S rRNA where it nucleates assembly of the body of the 30S subunit. Functionally, with S5 and S12 plays an important role in translational accuracy. This Dictyoglomus thermophilum (strain ATCC 35947 / DSM 3960 / H-6-12) protein is Small ribosomal subunit protein uS4.